The sequence spans 485 residues: Glutamyl-tRNA(Gln) amidotransferase subunit A (485 aa).

Residues lysine 79 and serine 154 each act as charge relay system in the active site. Serine 178 acts as the Acyl-ester intermediate in catalysis.

The protein belongs to the amidase family. GatA subfamily. As to quaternary structure, heterotrimer of A, B and C subunits.

The catalysed reaction is L-glutamyl-tRNA(Gln) + L-glutamine + ATP + H2O = L-glutaminyl-tRNA(Gln) + L-glutamate + ADP + phosphate + H(+). Allows the formation of correctly charged Gln-tRNA(Gln) through the transamidation of misacylated Glu-tRNA(Gln) in organisms which lack glutaminyl-tRNA synthetase. The reaction takes place in the presence of glutamine and ATP through an activated gamma-phospho-Glu-tRNA(Gln). In Staphylococcus saprophyticus subsp. saprophyticus (strain ATCC 15305 / DSM 20229 / NCIMB 8711 / NCTC 7292 / S-41), this protein is Glutamyl-tRNA(Gln) amidotransferase subunit A.